The chain runs to 391 residues: Alanine racemase (391 aa).

Catalysis depends on Lys-46, which acts as the Proton acceptor; specific for D-alanine. Position 46 is an N6-(pyridoxal phosphate)lysine (Lys-46). Substrate is bound at residue Arg-148. Tyr-283 serves as the catalytic Proton acceptor; specific for L-alanine. A substrate-binding site is contributed by Met-331.

This sequence belongs to the alanine racemase family. The cofactor is pyridoxal 5'-phosphate.

It carries out the reaction L-alanine = D-alanine. The protein operates within amino-acid biosynthesis; D-alanine biosynthesis; D-alanine from L-alanine: step 1/1. Its function is as follows. Catalyzes the interconversion of L-alanine and D-alanine. May also act on other amino acids. The polypeptide is Alanine racemase (alr) (Streptomyces coelicolor (strain ATCC BAA-471 / A3(2) / M145)).